A 185-amino-acid chain; its full sequence is Ribosome-recycling factor (185 aa).

Residues 140–168 are disordered; the sequence is KKEQKDGNITEDEQRNLEKQVQKITDDST.

This sequence belongs to the RRF family.

It is found in the cytoplasm. Responsible for the release of ribosomes from messenger RNA at the termination of protein biosynthesis. May increase the efficiency of translation by recycling ribosomes from one round of translation to another. The sequence is that of Ribosome-recycling factor from Lactobacillus helveticus (strain DPC 4571).